Here is a 269-residue protein sequence, read N- to C-terminus: 4-hydroxy-tetrahydrodipicolinate reductase (269 aa).

NAD(+) is bound by residues 11–16 and glutamate 37; that span reads GASGRM. Arginine 38 is a binding site for NADP(+). NAD(+) contacts are provided by residues 101 to 103 and 125 to 128; these read GTT and AGNM. Histidine 158 (proton donor/acceptor) is an active-site residue. Histidine 159 provides a ligand contact to (S)-2,3,4,5-tetrahydrodipicolinate. Residue lysine 162 is the Proton donor of the active site. 168-169 provides a ligand contact to (S)-2,3,4,5-tetrahydrodipicolinate; that stretch reads GT.

This sequence belongs to the DapB family.

It is found in the cytoplasm. The enzyme catalyses (S)-2,3,4,5-tetrahydrodipicolinate + NAD(+) + H2O = (2S,4S)-4-hydroxy-2,3,4,5-tetrahydrodipicolinate + NADH + H(+). It catalyses the reaction (S)-2,3,4,5-tetrahydrodipicolinate + NADP(+) + H2O = (2S,4S)-4-hydroxy-2,3,4,5-tetrahydrodipicolinate + NADPH + H(+). The protein operates within amino-acid biosynthesis; L-lysine biosynthesis via DAP pathway; (S)-tetrahydrodipicolinate from L-aspartate: step 4/4. Catalyzes the conversion of 4-hydroxy-tetrahydrodipicolinate (HTPA) to tetrahydrodipicolinate. This chain is 4-hydroxy-tetrahydrodipicolinate reductase, found in Ruegeria pomeroyi (strain ATCC 700808 / DSM 15171 / DSS-3) (Silicibacter pomeroyi).